The sequence spans 221 residues: Probable septum site-determining protein MinC (221 aa).

This sequence belongs to the MinC family. In terms of assembly, interacts with MinD and FtsZ.

In terms of biological role, cell division inhibitor that blocks the formation of polar Z ring septums. Rapidly oscillates between the poles of the cell to destabilize FtsZ filaments that have formed before they mature into polar Z rings. Prevents FtsZ polymerization. This Aliivibrio salmonicida (strain LFI1238) (Vibrio salmonicida (strain LFI1238)) protein is Probable septum site-determining protein MinC.